A 518-amino-acid polypeptide reads, in one-letter code: Protein FAM98A (518 aa).

Disordered regions lie at residues 300-415 (GRVP…GHSS) and 434-518 (GSGY…HYTS). Residues 302-311 (VPDRGGRPNE) show a composition bias toward basic and acidic residues. Gly residues-rich tracts occupy residues 349–364 (GGRGGHEQGGGRGGRG), 383–396 (WTDGGSGGGGGYQD), and 405–415 (QPGGYHGGHSS). A compositionally biased stretch (basic and acidic residues) spans 447-459 (RYQDGGHHGDRGG). The segment covering 460–484 (GRGGRGGRGGRGGRAGQGGGWGGRG) has biased composition (gly residues). Over residues 488-504 (YHQGGQFEQHFQHGGYQ) the composition is skewed to low complexity. The span at 505 to 518 (YNHSGFGQGRHYTS) shows a compositional bias: polar residues.

This sequence belongs to the FAM98 family. As to quaternary structure, interacts (via N- and C-terminus) with DDX1. Interacts (via N- and C-terminus) with C14orf166. Interacts with FAM98B. Interacts with PLEKHM1 (via N- and C-terminus).

Functionally, positively stimulates PRMT1-induced protein arginine methylation. Involved in skeletal homeostasis. Positively regulates lysosome peripheral distribution and ruffled border formation in osteoclasts. The chain is Protein FAM98A from Pongo abelii (Sumatran orangutan).